The primary structure comprises 322 residues: Putative ankyrin repeat protein L897 (322 aa).

3 ANK repeats span residues 88–117 (DNEYYTYFALSIGAMDVFKWLISHGFSYDM), 181–210 (NIIDVIEYAVQINNCDIIKILVKKFIFWAN), and 248–277 (NKNEALKYAIMMKNYDMIELLINYNIQTDH).

The chain is Putative ankyrin repeat protein L897 from Acanthamoeba polyphaga (Amoeba).